We begin with the raw amino-acid sequence, 210 residues long: 3-hexulose-6-phosphate synthase 1 (210 aa).

This sequence belongs to the HPS/KGPDC family. HPS subfamily.

The catalysed reaction is D-ribulose 5-phosphate + formaldehyde = D-arabino-hex-3-ulose 6-phosphate. The protein operates within one-carbon metabolism; formaldehyde assimilation via RuMP pathway; D-fructose 6-phosphate from D-ribulose 5-phosphate and formaldehyde: step 1/2. Its function is as follows. Catalyzes the condensation of ribulose 5-phosphate with formaldehyde to form 3-hexulose 6-phosphate. This chain is 3-hexulose-6-phosphate synthase 1, found in Staphylococcus saprophyticus subsp. saprophyticus (strain ATCC 15305 / DSM 20229 / NCIMB 8711 / NCTC 7292 / S-41).